Here is a 118-residue protein sequence, read N- to C-terminus: Ribonuclease P protein component (118 aa).

The protein belongs to the RnpA family. In terms of assembly, consists of a catalytic RNA component (M1 or rnpB) and a protein subunit.

It carries out the reaction Endonucleolytic cleavage of RNA, removing 5'-extranucleotides from tRNA precursor.. Its function is as follows. RNaseP catalyzes the removal of the 5'-leader sequence from pre-tRNA to produce the mature 5'-terminus. It can also cleave other RNA substrates such as 4.5S RNA. The protein component plays an auxiliary but essential role in vivo by binding to the 5'-leader sequence and broadening the substrate specificity of the ribozyme. The polypeptide is Ribonuclease P protein component (Shewanella sp. (strain ANA-3)).